A 249-amino-acid polypeptide reads, in one-letter code: MPVISMKQLLEAGVHFGHQTRRWNPKMKKYIFTERNGIYIIDLQKTVKKVDEAFNFMREVASDNGTILFVGTKKQAQESVRDEAIRSGQYFVNHRWLGGTLTNFETIQKRIQHLKKIEKMEADGTFEVLPKKEVVLLKKEQEKLERFLGGIKDMKGLPDALFIVDPRKERIAVAEARKLHIPIIGIVDTNCDPDEIDYVIPANDDAIRAVKLLTAKMADAIIEVNQGEELTEAEVAPVEEKAAEETTEA.

It belongs to the universal ribosomal protein uS2 family.

This chain is Small ribosomal subunit protein uS2, found in Listeria innocua serovar 6a (strain ATCC BAA-680 / CLIP 11262).